Consider the following 433-residue polypeptide: Cyclin-dependent kinase 15 (433 aa).

Positions 46–83 (ASSSTASFHPRGLEAASAQKLKSKRPRSNSDSFQEENL) are disordered. One can recognise a Protein kinase domain in the interval 52–336 (SFHPRGLEAA…SKLPNYNPEW (285 aa)). ATP contacts are provided by residues 58-66 (LEAASAQKL) and E81. Residue T173 is the Proton acceptor of the active site.

The protein belongs to the protein kinase superfamily. CMGC Ser/Thr protein kinase family. CDC2/CDKX subfamily. Mg(2+) is required as a cofactor.

It catalyses the reaction L-seryl-[protein] + ATP = O-phospho-L-seryl-[protein] + ADP + H(+). It carries out the reaction L-threonyl-[protein] + ATP = O-phospho-L-threonyl-[protein] + ADP + H(+). In terms of biological role, serine/threonine-protein kinase that acts like an antiapoptotic protein that counters TRAIL/TNFSF10-induced apoptosis by inducing phosphorylation of BIRC5 at 'Thr-34'. The polypeptide is Cyclin-dependent kinase 15 (Cdk15) (Mus musculus (Mouse)).